A 308-amino-acid chain; its full sequence is Transcriptional adapter 1-2 (308 aa).

It belongs to the TADA1 family. As to quaternary structure, component of the Spt-Ada-Gcn5 acetyltransferase (SAGA) complex consisting of wda/Taf5L, Saf6, Taf9, Taf10b, Taf12, Ada1, Spt3, Spt7, Spt20, Sf3b3, Sf3b5, Nipped-A/Tra1, a histone acetyltransferase (HAT) module made up of Gcn5, Ada2b (Isoform B), Ada3 and Sgf29, and a deubiquitinase (DUB) module made up of not/nonstop, Sgf11 and e(y)2 tethered to SAGA by Atxn7. Not a component of the Ada2a-containing ATAC complex.

The protein resides in the nucleus. Component of the transcription regulatory complex SAGA, a multiprotein complex that activates transcription by remodeling chromatin and mediating histone acetylation and deubiquitination. The SAGA complex predominantly acetylates histone H3. The polypeptide is Transcriptional adapter 1-2 (Drosophila melanogaster (Fruit fly)).